Consider the following 404-residue polypeptide: Dihydrosphingosine 1-phosphate phosphatase YSR3 (404 aa).

Over 1-86 (MTIIQTVTEL…PFRDVYFKYT (86 aa)) the chain is Lumenal. The N-linked (GlcNAc...) asparagine glycan is linked to N62. Residues 87–107 (SLMGSHMFYVIVLPMPVWLGY) form a helical membrane-spanning segment. The Cytoplasmic segment spans residues 108–113 (RDLTRD). The chain crosses the membrane as a helical span at residues 114-134 (MIYVLGYSIYLSGYLKDYWCL). Positions 129 to 137 (KDYWCLPRP) are phosphatase sequence motif I. At 135–154 (PRPKSPPVDRITLSEYTTKE) the chain is on the lumenal side. Residues 155–176 (YGAPSSHSANATAVSLLFFWRI) form a helical membrane-spanning segment. The phosphatase sequence motif II stretch occupies residues 158–161 (PSSH). H161 (proton donor) is an active-site residue. The Cytoplasmic portion of the chain corresponds to 177-182 (CLSDTL). Residues 183–203 (VWPTKLLLLSLVIFYYLTLVF) traverse the membrane as a helical segment. Topologically, residues 204 to 215 (GRVYCGMHGMLD) are lumenal. The phosphatase sequence motif III stretch occupies residues 204-215 (GRVYCGMHGMLD). The active-site Nucleophile is the H211. Residues 216–236 (LFSGAAVGAICFFIRIWVVHA) traverse the membrane as a helical segment. Residues 237 to 241 (LRNFQ) lie on the Cytoplasmic side of the membrane. A helical transmembrane segment spans residues 242-262 (IGEHLWFPLLSVAWGLFILFN). Residues 263 to 319 (HVRPIDECPCFEDSVAFIGVVSGLDCSDWLTERYGWNLVCSRYASCGSKVFLRPLVG) are Lumenal-facing. Residues 320–340 (VASVIVWKDVISKTAVYTLLI) form a helical membrane-spanning segment. Residues 341–379 (KLLRFHDDRSEKVHFHNETSEEEECLLYSGVSKVEIVGR) are Cytoplasmic-facing. Residues 380–400 (FLIYAGIPTTVFLLCPVFFTW) form a helical membrane-spanning segment. At 401 to 404 (TNLR) the chain is on the lumenal side.

This sequence belongs to the type 2 lipid phosphate phosphatase family.

It is found in the endoplasmic reticulum membrane. The catalysed reaction is sphinganine 1-phosphate + H2O = sphinganine + phosphate. Dihydrosphingosine 1-phosphate phosphatase required for efficient ceramide synthesis from exogenous sphingoid bases. Involved in endocytosis and calcium-mediated signaling. This Saccharomyces cerevisiae (strain ATCC 204508 / S288c) (Baker's yeast) protein is Dihydrosphingosine 1-phosphate phosphatase YSR3.